The following is a 524-amino-acid chain: Serine/threonine-protein phosphatase 2A 56 kDa regulatory subunit gamma isoform (524 aa).

An N-acetylmethionine modification is found at Met1. The Nuclear localization signal signature appears at 472 to 489 (RKTVSDEARQAQKDPKKE). The disordered stretch occupies residues 476–524 (SDEARQAQKDPKKERPLARRKSELPQDPHTKKALEAHCRADELVPQDGR).

The protein belongs to the phosphatase 2A regulatory subunit B56 family. As to quaternary structure, PP2A consists of a common heterodimeric core enzyme, composed of PPP2CA a 36 kDa catalytic subunit (subunit C) and PPP2R1A a 65 kDa constant regulatory subunit (PR65 or subunit A), that associates with a variety of regulatory subunits. Proteins that associate with the core dimer include three families of regulatory subunits B (the R2/B/PR55/B55, R3/B''/PR72/PR130/PR59 and R5/B'/B56 families), the 48 kDa variable regulatory subunit, viral proteins, and cell signaling molecules. Interacts with SGO1. Interacts with SGO1; the interaction is direct. May interact with TP53. Interacts with IER3 and/or ERK kinases; regulates ERK dephosphorylation Interacts with CIP2A; this interaction stabilizes CIP2A. As to expression, highly expressed in testis, heart and spleen. Also found in brain and skeletal muscle.

Its subcellular location is the nucleus. The protein resides in the chromosome. It localises to the centromere. The B regulatory subunit might modulate substrate selectivity and catalytic activity, and might also direct the localization of the catalytic enzyme to a particular subcellular compartment. The PP2A-PPP2R5C holoenzyme may activate TP53 and play a role in DNA damage-induced inhibition of cell proliferation. PP2A-PPP2R5C may also regulate the ERK signaling pathway through ERK dephosphorylation. The chain is Serine/threonine-protein phosphatase 2A 56 kDa regulatory subunit gamma isoform (PPP2R5C) from Oryctolagus cuniculus (Rabbit).